Consider the following 162-residue polypeptide: Shikimate kinase (162 aa).

Gly-11 to Ser-16 is a binding site for ATP. Ser-15 contributes to the Mg(2+) binding site. The substrate site is built by Asp-33, Arg-57, and Gly-80. Positions Asn-109–Thr-123 are LID domain. Arg-116 contributes to the ATP binding site. Residue Arg-132 coordinates substrate.

The protein belongs to the shikimate kinase family. Monomer. Requires Mg(2+) as cofactor.

Its subcellular location is the cytoplasm. The catalysed reaction is shikimate + ATP = 3-phosphoshikimate + ADP + H(+). It functions in the pathway metabolic intermediate biosynthesis; chorismate biosynthesis; chorismate from D-erythrose 4-phosphate and phosphoenolpyruvate: step 5/7. In terms of biological role, catalyzes the specific phosphorylation of the 3-hydroxyl group of shikimic acid using ATP as a cosubstrate. In Helicobacter pylori (strain ATCC 700392 / 26695) (Campylobacter pylori), this protein is Shikimate kinase (aroK).